Consider the following 145-residue polypeptide: Bacilliredoxin Acid345_1880 (145 aa).

Belongs to the bacilliredoxin family.

This is Bacilliredoxin Acid345_1880 from Koribacter versatilis (strain Ellin345).